A 135-amino-acid chain; its full sequence is UPF0201 protein TON_1346 (135 aa).

This sequence belongs to the UPF0201 family.

This Thermococcus onnurineus (strain NA1) protein is UPF0201 protein TON_1346.